The following is a 265-amino-acid chain: UPF0026 protein slr1464 (265 aa).

The 237-residue stretch at 16 to 252 (RYGRSLGIDP…QNLAKKISGA (237 aa)) folds into the Radical SAM core domain. Cysteine 32, cysteine 36, and cysteine 39 together coordinate [4Fe-4S] cluster. A disordered region spans residues 204–230 (RPTRPKPLQRELEGRGNHTGTPYGDRP).

It belongs to the UPF0026 family. [4Fe-4S] cluster is required as a cofactor.

The chain is UPF0026 protein slr1464 from Synechocystis sp. (strain ATCC 27184 / PCC 6803 / Kazusa).